Consider the following 275-residue polypeptide: Large ribosomal subunit protein uL2 (275 aa).

The interval 223-275 is disordered; sequence VAMNPIDHPHGGGEGRTSGGRHPVSPWGVPTKGYKTRSNKRTDKYIVRRRNKK.

Belongs to the universal ribosomal protein uL2 family. Part of the 50S ribosomal subunit. Forms a bridge to the 30S subunit in the 70S ribosome.

One of the primary rRNA binding proteins. Required for association of the 30S and 50S subunits to form the 70S ribosome, for tRNA binding and peptide bond formation. It has been suggested to have peptidyltransferase activity; this is somewhat controversial. Makes several contacts with the 16S rRNA in the 70S ribosome. The chain is Large ribosomal subunit protein uL2 from Shewanella woodyi (strain ATCC 51908 / MS32).